We begin with the raw amino-acid sequence, 687 residues long: Dentin sialophosphoprotein (687 aa).

A signal peptide spans 1 to 17 (MKTKIIIYICIWATAWA). The disordered stretch occupies residues 54–113 (NNATNDDSPKGSELGRQVHSNGGYERDRNGSESIAVGGKSSPTQPILANAQGNSAKERED). Residue asparagine 55 is glycosylated (N-linked (GlcNAc...) asparagine). Threonine 57 is subject to Phosphothreonine; by CK2. N-linked (GlcNAc...) asparagine glycosylation occurs at asparagine 82. A compositionally biased stretch (polar residues) spans 93 to 107 (SSPTQPILANAQGNS). Residue asparagine 128 is glycosylated (N-linked (GlcNAc...) asparagine). The segment covering 146 to 160 (EAKESKVHGQPHQDT) has biased composition (basic and acidic residues). Positions 146-687 (EAKESKVHGQ…SDSNHSTSDD (542 aa)) are disordered. Residues 161–194 (KTGLASDTSQNGDATLVQENEPQVAGSKNSTNHE) are compositionally biased toward polar residues. An N-linked (GlcNAc...) asparagine glycan is attached at asparagine 189. Serine 226 carries the phosphoserine; by CK2 modification. The residue at position 253 (serine 253) is a Phosphoserine; by CK1. Residues 262–275 (GDGRESHDGTEGHE) show a composition bias toward basic and acidic residues. Polar residues predominate over residues 276 to 292 (GQSSGGNNDNRGQGSVS). Serine 278 is subject to Phosphoserine; by CK1. Position 292 is a phosphoserine; by CK2 (serine 292). Position 298 is a phosphoserine; by CK1 (serine 298). The N-linked (GlcNAc...) asparagine glycan is linked to asparagine 312. Position 315 is a phosphoserine; by CK2 (serine 315). Residues threonine 319 and threonine 329 each carry the phosphothreonine; by CK2 modification. 2 positions are modified to phosphoserine; by CK2: serine 337 and serine 345. Residues 352–375 (SGQSQNQGLETEGSSTGNKSSITK) show a composition bias toward polar residues. The residue at position 366 (serine 366) is a Phosphoserine; by CK1. N-linked (GlcNAc...) asparagine glycosylation is present at asparagine 369. A compositionally biased stretch (basic and acidic residues) spans 386–417 (SNGHHGMELDKRNSPKQGESDKPQGAAEKSDT). Positions 418 to 432 (HNNMGHSRIGSSSNS) are enriched in polar residues. Residues 447–460 (GDDPNSSDESNGSD) are compositionally biased toward low complexity. Positions 500–521 (DDSSDDTSDTDDSDSNGDDDSE) are enriched in acidic residues. Residues 522 to 545 (SKDKDESDNSNHDNDSDSESKSDS) are compositionally biased toward basic and acidic residues. Over residues 555–598 (SSDSSDSSDSSETSDSSDSSDTSDSSDSSDSSDSSNSSDTSDSS) the composition is skewed to low complexity. Residues 599–617 (DSSDGDSSDGDSSDSDSSD) show a composition bias toward acidic residues. The span at 618 to 639 (SDSSNSSDSDSSDSSDSSSSDS) shows a compositional bias: low complexity. Residues 667–677 (SDSDSDSDSEG) are compositionally biased toward acidic residues. Over residues 678 to 687 (SDSNHSTSDD) the composition is skewed to low complexity.

Interacts with FBLN7. DSP is glycosylated. As to expression, specifically expressed in teeth, mainly in odontoblasts and transiently in pre-ameloblasts.

The protein resides in the secreted. The protein localises to the extracellular space. It is found in the extracellular matrix. Its function is as follows. DSP may be an important factor in dentinogenesis. DPP may bind high amount of calcium and facilitate initial mineralization of dentin matrix collagen as well as regulate the size and shape of the crystals. This chain is Dentin sialophosphoprotein (Dspp), found in Rattus norvegicus (Rat).